A 29-amino-acid polypeptide reads, in one-letter code: Cycloviolacin-O22 (29 aa).

Residues 1–29 (GLPICGETCVGGTCNTPGCTCSWPVCTRN) constitute a cross-link (cyclopeptide (Gly-Asn)). Cystine bridges form between cysteine 5–cysteine 19, cysteine 9–cysteine 21, and cysteine 14–cysteine 26.

In terms of processing, this is a cyclic peptide. Expressed in roots and runners but not in leaves, petals and petioles (at protein level).

Functionally, probably participates in a plant defense mechanism. This chain is Cycloviolacin-O22, found in Viola odorata (Sweet violet).